Reading from the N-terminus, the 79-residue chain is Putative transmembrane protein ORF17 (79 aa).

A run of 2 helical transmembrane segments spans residues 8 to 28 (LMIY…IMYY) and 50 to 70 (VFVM…TTTI).

It localises to the host membrane. The polypeptide is Putative transmembrane protein ORF17 (Haloarcula hispanica (His1V)).